A 227-amino-acid polypeptide reads, in one-letter code: 2-C-methyl-D-erythritol 4-phosphate cytidylyltransferase (227 aa).

This sequence belongs to the IspD/TarI cytidylyltransferase family. IspD subfamily.

It catalyses the reaction 2-C-methyl-D-erythritol 4-phosphate + CTP + H(+) = 4-CDP-2-C-methyl-D-erythritol + diphosphate. Its pathway is isoprenoid biosynthesis; isopentenyl diphosphate biosynthesis via DXP pathway; isopentenyl diphosphate from 1-deoxy-D-xylulose 5-phosphate: step 2/6. Its function is as follows. Catalyzes the formation of 4-diphosphocytidyl-2-C-methyl-D-erythritol from CTP and 2-C-methyl-D-erythritol 4-phosphate (MEP). This chain is 2-C-methyl-D-erythritol 4-phosphate cytidylyltransferase, found in Petrotoga mobilis (strain DSM 10674 / SJ95).